The following is a 504-amino-acid chain: D-alanine--D-alanyl carrier protein ligase (504 aa).

152-153 (TS) provides a ligand contact to ATP. Aspartate 197 is a binding site for D-alanine. 292–297 (NTYGPT) provides a ligand contact to ATP. Valine 301 lines the D-alanine pocket. ATP contacts are provided by residues aspartate 383, 394–397 (YNGR), and lysine 492. Lysine 492 serves as a coordination point for D-alanine.

The protein belongs to the ATP-dependent AMP-binding enzyme family. DltA subfamily.

The protein resides in the cytoplasm. It catalyses the reaction holo-[D-alanyl-carrier protein] + D-alanine + ATP = D-alanyl-[D-alanyl-carrier protein] + AMP + diphosphate. The protein operates within cell wall biogenesis; lipoteichoic acid biosynthesis. Functionally, catalyzes the first step in the D-alanylation of lipoteichoic acid (LTA), the activation of D-alanine and its transfer onto the D-alanyl carrier protein (Dcp) DltC. In an ATP-dependent two-step reaction, forms a high energy D-alanyl-AMP intermediate, followed by transfer of the D-alanyl residue as a thiol ester to the phosphopantheinyl prosthetic group of the Dcp. D-alanylation of LTA plays an important role in modulating the properties of the cell wall in Gram-positive bacteria, influencing the net charge of the cell wall. This Bacillus cytotoxicus (strain DSM 22905 / CIP 110041 / 391-98 / NVH 391-98) protein is D-alanine--D-alanyl carrier protein ligase.